Here is a 326-residue protein sequence, read N- to C-terminus: Beta-ketoacyl-[acyl-carrier-protein] synthase III (326 aa).

Catalysis depends on residues C111 and H252. The ACP-binding stretch occupies residues 253-257 (QANIR). N282 is an active-site residue.

It belongs to the thiolase-like superfamily. FabH family. As to quaternary structure, homodimer.

The protein resides in the plastid. The protein localises to the chloroplast. The catalysed reaction is malonyl-[ACP] + acetyl-CoA + H(+) = 3-oxobutanoyl-[ACP] + CO2 + CoA. It participates in lipid metabolism; fatty acid biosynthesis. Functionally, catalyzes the condensation reaction of fatty acid synthesis by the addition to an acyl acceptor of two carbons from malonyl-ACP. Catalyzes the first condensation reaction which initiates fatty acid synthesis and may therefore play a role in governing the total rate of fatty acid production. Possesses both acetoacetyl-ACP synthase and acetyl transacylase activities. Its substrate specificity determines the biosynthesis of branched-chain and/or straight-chain of fatty acids. The protein is Beta-ketoacyl-[acyl-carrier-protein] synthase III of Porphyra purpurea (Red seaweed).